The chain runs to 134 residues: Large ribosomal subunit protein uL24 (134 aa).

The protein belongs to the universal ribosomal protein uL24 family. As to quaternary structure, part of the 50S ribosomal subunit.

Functionally, one of two assembly initiator proteins, it binds directly to the 5'-end of the 23S rRNA, where it nucleates assembly of the 50S subunit. Located at the polypeptide exit tunnel on the outside of the subunit. The polypeptide is Large ribosomal subunit protein uL24 (Sulfolobus acidocaldarius (strain ATCC 33909 / DSM 639 / JCM 8929 / NBRC 15157 / NCIMB 11770)).